The following is a 754-amino-acid chain: uncharacterized protein (754 aa).

The next 10 helical transmembrane spans lie at 3 to 23 (ITTV…LPQL), 24 to 44 (PGTL…FIPV), 50 to 70 (IALT…ILWA), 223 to 243 (HLMA…AGLI), 254 to 274 (WIHW…YAWL), 320 to 340 (VAIL…LIFW), 370 to 390 (LLLM…SFIA), 392 to 412 (LLAI…AMVV), 446 to 466 (WINI…LLVV), and 471 to 491 (AWRT…WPLW).

It to B.subtilis ComEC, N.gonorrhoeae ComA, and H.influenzae Rec2.

Its subcellular location is the cell membrane. This is an uncharacterized protein from Escherichia coli (strain K12).